Consider the following 257-residue polypeptide: Pimeloyl-[acyl-carrier protein] methyl ester esterase (257 aa).

The AB hydrolase-1 domain maps to 15 to 241; that stretch reads HLVLLHGWGL…KAAHAPFVSH (227 aa). Substrate is bound by residues Trp-22, 82-83, and 143-147; these read SL and FLALQ. Ser-82 serves as the catalytic Nucleophile. Residues Asp-207 and His-235 contribute to the active site. Substrate is bound at residue His-235.

Belongs to the AB hydrolase superfamily. Carboxylesterase BioH family. As to quaternary structure, monomer.

The protein resides in the cytoplasm. The enzyme catalyses 6-carboxyhexanoyl-[ACP] methyl ester + H2O = 6-carboxyhexanoyl-[ACP] + methanol + H(+). Its pathway is cofactor biosynthesis; biotin biosynthesis. Functionally, the physiological role of BioH is to remove the methyl group introduced by BioC when the pimeloyl moiety is complete. It allows to synthesize pimeloyl-ACP via the fatty acid synthetic pathway through the hydrolysis of the ester bonds of pimeloyl-ACP esters. The protein is Pimeloyl-[acyl-carrier protein] methyl ester esterase of Klebsiella pneumoniae subsp. pneumoniae (strain ATCC 700721 / MGH 78578).